Here is a 451-residue protein sequence, read N- to C-terminus: Trigger factor (451 aa).

The PPIase FKBP-type domain occupies 165–250 (DDKLTIDFEG…LRQIQAREAL (86 aa)).

It belongs to the FKBP-type PPIase family. Tig subfamily.

Its subcellular location is the cytoplasm. The enzyme catalyses [protein]-peptidylproline (omega=180) = [protein]-peptidylproline (omega=0). In terms of biological role, involved in protein export. Acts as a chaperone by maintaining the newly synthesized protein in an open conformation. Functions as a peptidyl-prolyl cis-trans isomerase. In Helicobacter pylori (strain Shi470), this protein is Trigger factor.